The chain runs to 713 residues: BBSome complex assembly protein BBS10 (713 aa).

It belongs to the TCP-1 chaperonin family. In terms of assembly, component of a complex composed at least of MKKS, BBS10, BBS12, TCP1, CCT2, CCT3, CCT4, CCT5 and CCT8.

It is found in the cell projection. It localises to the cilium. Functionally, probable molecular chaperone that assists the folding of proteins upon ATP hydrolysis. Plays a role in the assembly of BBSome, a complex involved in ciliogenesis regulating transports vesicles to the cilia. Involved in adipogenic differentiation. In Mus musculus (Mouse), this protein is BBSome complex assembly protein BBS10 (Bbs10).